The following is a 208-amino-acid chain: Uracil phosphoribosyltransferase (208 aa).

5-phospho-alpha-D-ribose 1-diphosphate contacts are provided by residues R78, R103, and 130–138; that span reads DPMLATGGS. Uracil is bound by residues I193 and 198–200; that span reads GDA. 5-phospho-alpha-D-ribose 1-diphosphate is bound at residue D199.

It belongs to the UPRTase family. Requires Mg(2+) as cofactor.

It carries out the reaction UMP + diphosphate = 5-phospho-alpha-D-ribose 1-diphosphate + uracil. The protein operates within pyrimidine metabolism; UMP biosynthesis via salvage pathway; UMP from uracil: step 1/1. Allosterically activated by GTP. Its function is as follows. Catalyzes the conversion of uracil and 5-phospho-alpha-D-ribose 1-diphosphate (PRPP) to UMP and diphosphate. The sequence is that of Uracil phosphoribosyltransferase from Klebsiella pneumoniae subsp. pneumoniae (strain ATCC 700721 / MGH 78578).